Here is a 288-residue protein sequence, read N- to C-terminus: MSSRKQGSQPRGQQSAEEENFKKPTRSNMQRSKMRGASSGKKTAGPQQKNLEPALPGRWGGRSAENPPSGSVRKTRKNKQKTPGNEDGGSTSEAPQPPRKKRARADPTVESEEAFKNRMEVKVKIPEELKPWLVEDWDLVTRQKQLFQLPAKKNVDAILEEYANCKKSQGNVDNKEYAVNEVVAGIKEYFNVMLGTQLLYKFERPQYAEILLAHPDAPMSQVYGAPHLLRLFVRIGAMLAYTPLDEKSLALLLGYLHDFLKYLAKNSASLFTASDYKVASAEYHRKAL.

Positions 1-15 (MSSRKQGSQPRGQQS) are enriched in polar residues. Positions 1-113 (MSSRKQGSQP…RADPTVESEE (113 aa)) are disordered. Position 71 is a phosphoserine (Ser-71). One can recognise an MRG domain in the interval 117-288 (NRMEVKVKIP…ASAEYHRKAL (172 aa)).

Component of the NuA4 histone acetyltransferase complex which contains the catalytic subunit KAT5/TIP60 and the subunits EP400, TRRAP/PAF400, BRD8/SMAP, EPC1, DMAP1/DNMAP1, RUVBL1/TIP49, RUVBL2, ING3, actin, ACTL6A/BAF53A, MORF4L1/MRG15, MORF4L2/MRGX, MRGBP, YEATS4/GAS41 and VPS72/YL1. The NuA4 complex interacts with MYC and the adenovirus E1A protein. MORF4L1 may also participate in the formation of NuA4 related complexes which lack the KAT5/TIP60 catalytic subunit, but which include the SWI/SNF related protein SRCAP. Component of the MSIN3A histone deacetylase complex, which includes SIN3A, HDAC2, ARID4B, MORF4L1, RBBP4/RbAp48, and RBBP7/RbAp46. Interacts with MRFAP1 and RB1. May also interact with one or more as yet undefined members of the TLE (transducin-like enhancer of split) family of transcriptional repressors.

The protein resides in the nucleus. Component of the NuA4 histone acetyltransferase complex which is involved in transcriptional activation of select genes principally by acetylation of nucleosomal histone H4 and H2A. This modification may both alter nucleosome - DNA interactions and promote interaction of the modified histones with other proteins which positively regulate transcription. This complex may be required for the activation of transcriptional programs associated with oncogene and proto-oncogene mediated growth induction, tumor suppressor mediated growth arrest and replicative senescence, apoptosis, and DNA repair. The NuA4 complex ATPase and helicase activities seem to be, at least in part, contributed by the association of RUVBL1 and RUVBL2 with EP400. NuA4 may also play a direct role in DNA repair when directly recruited to sites of DNA damage. Also a component of the MSIN3A complex which acts to repress transcription by deacetylation of nucleosomal histones. This Macaca fascicularis (Crab-eating macaque) protein is Mortality factor 4-like protein 2 (MORF4L2).